The following is a 142-amino-acid chain: Transcriptional regulator MraZ (142 aa).

2 consecutive SpoVT-AbrB domains span residues 5-51 (ASAL…PRPE) and 77-120 (AMDV…DSQT).

Belongs to the MraZ family. As to quaternary structure, forms oligomers.

Its subcellular location is the cytoplasm. It localises to the nucleoid. This chain is Transcriptional regulator MraZ, found in Burkholderia cenocepacia (strain ATCC BAA-245 / DSM 16553 / LMG 16656 / NCTC 13227 / J2315 / CF5610) (Burkholderia cepacia (strain J2315)).